Here is a 479-residue protein sequence, read N- to C-terminus: UDP-N-acetylmuramate--L-alanine ligase (479 aa).

Residue 115–121 (GTHGKTT) participates in ATP binding.

It belongs to the MurCDEF family.

It is found in the cytoplasm. The enzyme catalyses UDP-N-acetyl-alpha-D-muramate + L-alanine + ATP = UDP-N-acetyl-alpha-D-muramoyl-L-alanine + ADP + phosphate + H(+). It functions in the pathway cell wall biogenesis; peptidoglycan biosynthesis. Cell wall formation. The chain is UDP-N-acetylmuramate--L-alanine ligase from Acidiphilium cryptum (strain JF-5).